Consider the following 286-residue polypeptide: Prohibitin-2, mitochondrial (286 aa).

Over 1–13 the chain is Mitochondrial matrix; it reads MSFNKVPNIPGAP. The chain crosses the membrane as a helical; Signal-anchor for type II membrane protein span at residues 14-32; it reads ALSALLKVSVIGGLGVYAL. Over 33–286 the chain is Mitochondrial intermembrane; sequence TNSLYNVDGG…LQEMNLEPKK (254 aa). Residues 186 to 219 adopt a coiled-coil conformation; it reads KEFTAAIEAKQVAAQEAERAKFIVEKAEQDRRSA.

It belongs to the prohibitin family. In terms of assembly, component of a prohibitin multimeric complex in mitochondrial membranes. In terms of tissue distribution, mostly expressed in proliferative tissues, including vasculature, shoot and root apical tissues.

The protein localises to the mitochondrion inner membrane. Its function is as follows. Prohibitin probably acts as a holdase/unfoldase for the stabilization of newly synthesized mitochondrial proteins. In Arabidopsis thaliana (Mouse-ear cress), this protein is Prohibitin-2, mitochondrial (PHB2).